A 101-amino-acid chain; its full sequence is Large ribosomal subunit protein uL24 (101 aa).

Belongs to the universal ribosomal protein uL24 family. Part of the 50S ribosomal subunit.

Functionally, one of two assembly initiator proteins, it binds directly to the 5'-end of the 23S rRNA, where it nucleates assembly of the 50S subunit. One of the proteins that surrounds the polypeptide exit tunnel on the outside of the subunit. The sequence is that of Large ribosomal subunit protein uL24 from Streptococcus mutans serotype c (strain ATCC 700610 / UA159).